The chain runs to 117 residues: Small ribosomal subunit protein bS6 (117 aa).

Positions 96 to 117 (KEAAAPAPKAAPVESAPAVEAE) are disordered. A compositionally biased stretch (low complexity) spans 99 to 117 (AAPAPKAAPVESAPAVEAE).

This sequence belongs to the bacterial ribosomal protein bS6 family.

In terms of biological role, binds together with bS18 to 16S ribosomal RNA. This chain is Small ribosomal subunit protein bS6, found in Geobacter sulfurreducens (strain ATCC 51573 / DSM 12127 / PCA).